The sequence spans 207 residues: Large ribosomal subunit protein uL4 (207 aa).

The segment at 56–77 (FVSGGGKKPWRQKGTGRARHGS) is disordered. A compositionally biased stretch (basic residues) spans 63–77 (KPWRQKGTGRARHGS).

This sequence belongs to the universal ribosomal protein uL4 family. In terms of assembly, part of the 50S ribosomal subunit.

In terms of biological role, one of the primary rRNA binding proteins, this protein initially binds near the 5'-end of the 23S rRNA. It is important during the early stages of 50S assembly. It makes multiple contacts with different domains of the 23S rRNA in the assembled 50S subunit and ribosome. Its function is as follows. Forms part of the polypeptide exit tunnel. This is Large ribosomal subunit protein uL4 from Phytoplasma australiense.